A 236-amino-acid chain; its full sequence is Thiamine import ATP-binding protein ThiQ (236 aa).

Positions 2-230 (LKLEKITYLY…SAAKASVLGI (229 aa)) constitute an ABC transporter domain. 32 to 39 (GPSGAGKS) provides a ligand contact to ATP.

It belongs to the ABC transporter superfamily. Thiamine importer (TC 3.A.1.19.1) family. As to quaternary structure, the complex is composed of two ATP-binding proteins (ThiQ), two transmembrane proteins (ThiP) and a solute-binding protein (ThiB).

The protein resides in the cell inner membrane. It catalyses the reaction thiamine(out) + ATP + H2O = thiamine(in) + ADP + phosphate + H(+). Functionally, part of the ABC transporter complex ThiBPQ involved in thiamine import. Responsible for energy coupling to the transport system. In Yersinia pseudotuberculosis serotype I (strain IP32953), this protein is Thiamine import ATP-binding protein ThiQ.